The sequence spans 289 residues: ATP synthase gamma chain (289 aa).

It belongs to the ATPase gamma chain family. F-type ATPases have 2 components, CF(1) - the catalytic core - and CF(0) - the membrane proton channel. CF(1) has five subunits: alpha(3), beta(3), gamma(1), delta(1), epsilon(1). CF(0) has three main subunits: a, b and c.

Its subcellular location is the cell inner membrane. Functionally, produces ATP from ADP in the presence of a proton gradient across the membrane. The gamma chain is believed to be important in regulating ATPase activity and the flow of protons through the CF(0) complex. This chain is ATP synthase gamma chain, found in Cereibacter sphaeroides (strain ATCC 17023 / DSM 158 / JCM 6121 / CCUG 31486 / LMG 2827 / NBRC 12203 / NCIMB 8253 / ATH 2.4.1.) (Rhodobacter sphaeroides).